Here is a 138-residue protein sequence, read N- to C-terminus: Acidic phospholipase A2 (138 aa).

Residues 1–16 form the signal peptide; it reads MRTLWIVAVLLLGVEG. 7 cysteine pairs are disulfide-bonded: Cys42–Cys131, Cys44–Cys60, Cys59–Cys111, Cys65–Cys138, Cys66–Cys104, Cys73–Cys97, and Cys91–Cys102. Tyr43, Gly45, and Gly47 together coordinate Ca(2+). The active site involves His63. Ca(2+) is bound at residue Asp64. Residue Asp105 is part of the active site.

It belongs to the phospholipase A2 family. Group II subfamily. D49 sub-subfamily. Homodimer. It depends on Ca(2+) as a cofactor. In terms of tissue distribution, expressed by the venom gland.

It is found in the secreted. It carries out the reaction a 1,2-diacyl-sn-glycero-3-phosphocholine + H2O = a 1-acyl-sn-glycero-3-phosphocholine + a fatty acid + H(+). Its function is as follows. PLA2 catalyzes the calcium-dependent hydrolysis of the 2-acyl groups in 3-sn-phosphoglycerides. The protein is Acidic phospholipase A2 of Crotalus atrox (Western diamondback rattlesnake).